A 244-amino-acid polypeptide reads, in one-letter code: Phosphoadenosine 5'-phosphosulfate reductase (244 aa).

Cys239 functions as the Nucleophile; cysteine thiosulfonate intermediate in the catalytic mechanism.

It belongs to the PAPS reductase family. CysH subfamily.

The protein resides in the cytoplasm. The catalysed reaction is [thioredoxin]-disulfide + sulfite + adenosine 3',5'-bisphosphate + 2 H(+) = [thioredoxin]-dithiol + 3'-phosphoadenylyl sulfate. Its pathway is sulfur metabolism; hydrogen sulfide biosynthesis; sulfite from sulfate: step 3/3. Functionally, catalyzes the formation of sulfite from phosphoadenosine 5'-phosphosulfate (PAPS) using thioredoxin as an electron donor. The polypeptide is Phosphoadenosine 5'-phosphosulfate reductase (Citrobacter koseri (strain ATCC BAA-895 / CDC 4225-83 / SGSC4696)).